The following is a 161-amino-acid chain: Allophycocyanin beta chain (161 aa).

Position 71 is an N4-methylasparagine (Asn71). Residue Cys81 participates in (2R,3E)-phycocyanobilin binding.

This sequence belongs to the phycobiliprotein family. As to quaternary structure, heterodimer of an alpha and a beta chain. In terms of processing, contains one covalently linked phycocyanobilin chromophore.

Its subcellular location is the plastid. It is found in the chloroplast thylakoid membrane. In terms of biological role, light-harvesting photosynthetic bile pigment-protein from the phycobiliprotein complex. Allophycocyanin has a maximum absorption at approximately 650 nanometers. The sequence is that of Allophycocyanin beta chain (apcB) from Cyanidium caldarium (Red alga).